The sequence spans 356 residues: Histidinol-phosphate aminotransferase (356 aa).

Lys214 is modified (N6-(pyridoxal phosphate)lysine).

The protein belongs to the class-II pyridoxal-phosphate-dependent aminotransferase family. Histidinol-phosphate aminotransferase subfamily. As to quaternary structure, homodimer. Pyridoxal 5'-phosphate is required as a cofactor.

It carries out the reaction L-histidinol phosphate + 2-oxoglutarate = 3-(imidazol-4-yl)-2-oxopropyl phosphate + L-glutamate. The protein operates within amino-acid biosynthesis; L-histidine biosynthesis; L-histidine from 5-phospho-alpha-D-ribose 1-diphosphate: step 7/9. This chain is Histidinol-phosphate aminotransferase, found in Escherichia coli O17:K52:H18 (strain UMN026 / ExPEC).